An 88-amino-acid chain; its full sequence is Small ribosomal subunit protein bS20 (88 aa).

Residues 1–22 (MANTPSAKKAVNKIAKRTQVNK) form a disordered region.

The protein belongs to the bacterial ribosomal protein bS20 family.

Binds directly to 16S ribosomal RNA. The polypeptide is Small ribosomal subunit protein bS20 (Bartonella bacilliformis (strain ATCC 35685 / KC583 / Herrer 020/F12,63)).